Reading from the N-terminus, the 96-residue chain is ESAT-6-like protein EsxR (96 aa).

It belongs to the WXG100 family. ESAT-6 subfamily.

It is found in the secreted. The polypeptide is ESAT-6-like protein EsxR (Mycobacterium leprae (strain TN)).